A 222-amino-acid polypeptide reads, in one-letter code: Cytidylate kinase (222 aa).

10-18 contributes to the ATP binding site; sequence GTSSSGKSV.

Belongs to the cytidylate kinase family. Type 1 subfamily.

Its subcellular location is the cytoplasm. The enzyme catalyses CMP + ATP = CDP + ADP. It carries out the reaction dCMP + ATP = dCDP + ADP. The sequence is that of Cytidylate kinase from Mycoplasma capricolum subsp. capricolum (strain California kid / ATCC 27343 / NCTC 10154).